The primary structure comprises 196 residues: Anthranilate synthase component 2 (196 aa).

A Glutamine amidotransferase type-1 domain is found at 3 to 196 (NIVFIDNFDS…IEWALEKNNA (194 aa)). An L-glutamine-binding site is contributed by 57–59 (GPG). Catalysis depends on Cys84, which acts as the Nucleophile; for GATase activity. Residues Gln88 and 134–135 (SL) contribute to the L-glutamine site. Catalysis depends on for GATase activity residues His170 and Glu172.

As to quaternary structure, heterotetramer consisting of two non-identical subunits: a beta subunit (TrpG) and a large alpha subunit (TrpE).

The catalysed reaction is chorismate + L-glutamine = anthranilate + pyruvate + L-glutamate + H(+). The protein operates within amino-acid biosynthesis; L-tryptophan biosynthesis; L-tryptophan from chorismate: step 1/5. Functionally, part of a heterotetrameric complex that catalyzes the two-step biosynthesis of anthranilate, an intermediate in the biosynthesis of L-tryptophan. In the first step, the glutamine-binding beta subunit (TrpG) of anthranilate synthase (AS) provides the glutamine amidotransferase activity which generates ammonia as a substrate that, along with chorismate, is used in the second step, catalyzed by the large alpha subunit of AS (TrpE) to produce anthranilate. In the absence of TrpG, TrpE can synthesize anthranilate directly from chorismate and high concentrations of ammonia. This Vibrio parahaemolyticus serotype O3:K6 (strain RIMD 2210633) protein is Anthranilate synthase component 2 (trpG).